The primary structure comprises 395 residues: Calsequestrin-1 (395 aa).

The N-terminal stretch at 1-28 (MNAADRMGARVALLLLLVLGSPQSGVHG) is a signal peptide. Tyr37 is subject to Phosphotyrosine. Ser75 carries the phosphoserine modification. Thr118 carries the post-translational modification Phosphothreonine. At Ser210 the chain carries Phosphoserine. An N-linked (GlcNAc...) asparagine glycan is attached at Asn344. A disordered region spans residues 376-395 (EGEINTEDDDDEDDDDDDDD).

It belongs to the calsequestrin family. Monomer; increases in response to a depletion of intracellular calcium. Homodimer. Homotetramer and homopolymer. Can form linear homooligomers. Ca(2+) ions promote oligomerization. Interacts (via C-terminal end and preferentially with the monomeric form) with STIM1; this interaction increases in response to a depletion of intracellular calcium, decreases both STIM1 aggregation and clustering, interaction of STIM1 with ORAI1 and store-operated Ca(2+) entry (SOCE) activity. Interacts with ASPH and TRDN. In terms of processing, N-glycosylated. Detected in skeletal muscle (at protein level). Detected in skeletal muscle.

It localises to the endoplasmic reticulum. The protein resides in the sarcoplasmic reticulum. Its subcellular location is the sarcoplasmic reticulum lumen. It is found in the mitochondrion matrix. The protein localises to the sarcoplasmic reticulum membrane. In terms of biological role, calsequestrin is a high-capacity, moderate affinity, calcium-binding protein and thus acts as an internal calcium store in muscle. Calcium ions are bound by clusters of acidic residues at the protein surface, often at the interface between subunits. Can bind around 80 Ca(2+) ions. Regulates the release of lumenal Ca(2+) via the calcium release channel RYR1; this plays an important role in triggering muscle contraction. Negatively regulates store-operated Ca(2+) entry (SOCE) activity. This Oryctolagus cuniculus (Rabbit) protein is Calsequestrin-1 (CASQ1).